The sequence spans 456 residues: Gamma-aminobutyric acid receptor subunit alpha-1 (456 aa).

Positions 1–27 are cleaved as a signal peptide; the sequence is MRKSPGLSDCLWAWILLLSTLTGRSYG. Topologically, residues 28–253 are extracellular; the sequence is QPSLQDELKD…FHLKRKIGYF (226 aa). N-linked (GlcNAc...) asparagine glycosylation is present at N38. R94 serves as a coordination point for 4-aminobutanoate. An N-linked (GlcNAc...) asparagine glycan is attached at N138. T157 serves as a coordination point for 4-aminobutanoate. Cysteines 166 and 180 form a disulfide. Residues 254 to 274 traverse the membrane as a helical segment; sequence VIQTYLPCIMTVILSQVSFWL. Position 273 (W273) interacts with 3alpha-hydroxy-5alpha-pregnan-11,20-dione. Over 275-279 the chain is Cytoplasmic; that stretch reads NRESV. A helical membrane pass occupies residues 280-301; that stretch reads PARTVFGVTTVLTMTTLSISAR. The Extracellular segment spans residues 302-311; that stretch reads NSLPKVAYAT. Residues 312 to 333 form a helical membrane-spanning segment; that stretch reads AMDWFIAVCYAFVFSALIEFAT. Topologically, residues 334–421 are cytoplasmic; that stretch reads VNYFTKRGYA…TFNSVSKIDR (88 aa). The helical transmembrane segment at 422–441 threads the bilayer; that stretch reads LSRIAFPLLFGIFNLVYWAT. Residues 442–456 are Extracellular-facing; the sequence is YLNREPQLKAPTPHQ.

The protein belongs to the ligand-gated ion channel (TC 1.A.9) family. Gamma-aminobutyric acid receptor (TC 1.A.9.5) subfamily. GABRA1 sub-subfamily. Heteropentamer, formed by a combination of alpha (GABRA1-6), beta (GABRB1-3), gamma (GABRG1-3), delta (GABRD), epsilon (GABRE), rho (GABRR1-3), pi (GABRP) and theta (GABRQ) subunits, each subunit exhibiting distinct physiological and pharmacological properties. Interacts with UBQLN1. Interacts with TRAK1. Interacts with KIF21B. Identified in a complex of 720 kDa composed of LHFPL4, NLGN2, GABRA1, GABRB2, GABRG2 and GABRB3. Interacts with LHFPL4. Interacts with NLGN2. Interacts with SHISA7; interaction leads regulation of GABAAR trafficking, channel deactivation kinetics and pharmacology.

It localises to the postsynaptic cell membrane. Its subcellular location is the cell membrane. The protein localises to the cytoplasmic vesicle membrane. It catalyses the reaction chloride(in) = chloride(out). With respect to regulation, allosterically activated by benzodiazepines and the anesthetic alphaxalone. Allosterically activated by pentobarbital. Inhibited by the antagonist bicuculline. Potentiated by histamine. Alpha subunit of the heteropentameric ligand-gated chloride channel gated by Gamma-aminobutyric acid (GABA), a major inhibitory neurotransmitter in the brain. GABA-gated chloride channels, also named GABA(A) receptors (GABAAR), consist of five subunits arranged around a central pore and contain GABA active binding site(s) located at the alpha and beta subunit interface(s). When activated by GABA, GABAARs selectively allow the flow of chloride anions across the cell membrane down their electrochemical gradient. Alpha-1/GABRA1-containing GABAARs are largely synaptic. Chloride influx into the postsynaptic neuron following GABAAR opening decreases the neuron ability to generate a new action potential, thereby reducing nerve transmission. GABAARs containing alpha-1 and beta-2 or -3 subunits exhibit synaptogenic activity; the gamma-2 subunit being necessary but not sufficient to induce rapid synaptic contacts formation. GABAARs function also as histamine receptor where histamine binds at the interface of two neighboring beta subunits and potentiates GABA response. GABAARs containing alpha, beta and epsilon subunits also permit spontaneous chloride channel activity while preserving the structural information required for GABA-gated openings. Alpha-1-mediated plasticity in the orbitofrontal cortex regulates context-dependent action selection. Together with rho subunits, may also control neuronal and glial GABAergic transmission in the cerebellum. The sequence is that of Gamma-aminobutyric acid receptor subunit alpha-1 from Homo sapiens (Human).